Here is a 274-residue protein sequence, read N- to C-terminus: NH(3)-dependent NAD(+) synthetase (274 aa).

27–34 (GLSGGIDS) is a binding site for ATP. Asp-33 serves as a coordination point for Mg(2+). Arg-121 is a deamido-NAD(+) binding site. Residue Thr-141 participates in ATP binding. Position 146 (Glu-146) interacts with Mg(2+). Residues Lys-170 and Ser-192 each contribute to the ATP site.

It belongs to the NAD synthetase family. Homodimer.

It carries out the reaction deamido-NAD(+) + NH4(+) + ATP = AMP + diphosphate + NAD(+) + H(+). Its pathway is cofactor biosynthesis; NAD(+) biosynthesis; NAD(+) from deamido-NAD(+) (ammonia route): step 1/1. Catalyzes the ATP-dependent amidation of deamido-NAD to form NAD. Uses ammonia as a nitrogen source. This Helicobacter hepaticus (strain ATCC 51449 / 3B1) protein is NH(3)-dependent NAD(+) synthetase.